Consider the following 253-residue polypeptide: Acetylglutamate kinase (253 aa).

Residues 37-38 (GG), Arg-59, and Asn-149 contribute to the substrate site.

This sequence belongs to the acetylglutamate kinase family. ArgB subfamily.

The protein resides in the cytoplasm. It carries out the reaction N-acetyl-L-glutamate + ATP = N-acetyl-L-glutamyl 5-phosphate + ADP. It participates in amino-acid biosynthesis; L-arginine biosynthesis; N(2)-acetyl-L-ornithine from L-glutamate: step 2/4. Its function is as follows. Catalyzes the ATP-dependent phosphorylation of N-acetyl-L-glutamate. This chain is Acetylglutamate kinase, found in Rubrobacter xylanophilus (strain DSM 9941 / JCM 11954 / NBRC 16129 / PRD-1).